The following is a 227-amino-acid chain: MADS-box transcription factor 25 (227 aa).

One can recognise an MADS-box domain in the interval Met-1–Ser-61. A K-box domain is found at Ala-86 to Arg-176. A disordered region spans residues Lys-183 to Glu-227. Over residues Ser-186–Arg-197 the composition is skewed to polar residues. A compositionally biased stretch (basic and acidic residues) spans Ser-198 to Glu-227.

As to expression, expressed in seedling roots.

The protein resides in the nucleus. In terms of biological role, probable transcription factor. In Oryza sativa subsp. japonica (Rice), this protein is MADS-box transcription factor 25 (MADS25).